The sequence spans 871 residues: Translation initiation factor IF-2 (871 aa).

Disordered regions lie at residues 60–101 (KKNI…QEVK) and 184–203 (ESLK…KKES). Over residues 61–72 (KNIKTPTAKKPK) the composition is skewed to basic residues. Over residues 73–101 (KENIKEQEKLNESEKKEPKKEEKLKQEVK) the composition is skewed to basic and acidic residues. The tr-type G domain occupies 370 to 537 (TRAPVITIMG…IVLLQADILE (168 aa)). The interval 379-386 (GHVDHGKT) is G1. 379 to 386 (GHVDHGKT) is a binding site for GTP. The G2 stretch occupies residues 404-408 (GITQH). The interval 425-428 (DTPG) is G3. GTP contacts are provided by residues 425–429 (DTPGH) and 479–482 (NKMD). Residues 479–482 (NKMD) are G4. Positions 515 to 517 (SAK) are G5.

Belongs to the TRAFAC class translation factor GTPase superfamily. Classic translation factor GTPase family. IF-2 subfamily.

The protein localises to the cytoplasm. One of the essential components for the initiation of protein synthesis. Protects formylmethionyl-tRNA from spontaneous hydrolysis and promotes its binding to the 30S ribosomal subunits. Also involved in the hydrolysis of GTP during the formation of the 70S ribosomal complex. The chain is Translation initiation factor IF-2 from Campylobacter jejuni subsp. jejuni serotype O:6 (strain 81116 / NCTC 11828).